A 142-amino-acid polypeptide reads, in one-letter code: Gonadotropin subunit beta-2 (142 aa).

A signal peptide spans 1-23 (MLGLHVGTLISLFLCILLEPVEG). Cystine bridges form between C29–C77, C43–C92, C46–C130, C54–C108, C58–C110, and C113–C120. N33 carries N-linked (GlcNAc...) asparagine glycosylation.

This sequence belongs to the glycoprotein hormones subunit beta family. Heterodimer of an alpha and a beta chain.

It localises to the secreted. Its function is as follows. Involved in gametogenesis and steroidogenesis. This Oncorhynchus keta (Chum salmon) protein is Gonadotropin subunit beta-2 (cgbb).